Here is a 130-residue protein sequence, read N- to C-terminus: Protein ApaG (130 aa).

An ApaG domain is found at Arg-3–Arg-127.

This chain is Protein ApaG, found in Bradyrhizobium diazoefficiens (strain JCM 10833 / BCRC 13528 / IAM 13628 / NBRC 14792 / USDA 110).